The following is a 451-amino-acid chain: Protein SAR DEFICIENT 1 (451 aa).

Residues 149–270 (DKWTSDEFES…AFHKKLSSRH (122 aa)) form a DNA-binding region.

It belongs to the plant ACBP60 protein family. (Microbial infection) Interacts with V.dahliae SCP41.

It localises to the nucleus. Functionally, transcription activator that binds DNA in a sequence-specific manner, 5'-GAAATTTTGG-3', to promote the expression of target genes. Recruited to the promoter of ICS1 and other defense-related genes (e.g. PR1 and SID2) in response to both biotic (e.g. Pseudomonas syringae pv. maculicola ES4326) and abiotic stresses (e.g. UV-B), thus triggering slow defense responses by stimulating salicylic acid (SA) biosynthesis. Required for basal and systemic acquired resistance to P.syringae pv. maculicola and Hyaloperonospora arabidopsidis. This Arabidopsis thaliana (Mouse-ear cress) protein is Protein SAR DEFICIENT 1.